Reading from the N-terminus, the 415-residue chain is Serine hydroxymethyltransferase 1 (415 aa).

(6S)-5,6,7,8-tetrahydrofolate is bound by residues L117 and G121 to L123. K225 is subject to N6-(pyridoxal phosphate)lysine. S349–F351 is a (6S)-5,6,7,8-tetrahydrofolate binding site.

It belongs to the SHMT family. As to quaternary structure, homodimer. The cofactor is pyridoxal 5'-phosphate.

The protein resides in the cytoplasm. It carries out the reaction (6R)-5,10-methylene-5,6,7,8-tetrahydrofolate + glycine + H2O = (6S)-5,6,7,8-tetrahydrofolate + L-serine. Its pathway is one-carbon metabolism; tetrahydrofolate interconversion. It participates in amino-acid biosynthesis; glycine biosynthesis; glycine from L-serine: step 1/1. In terms of biological role, catalyzes the reversible interconversion of serine and glycine with tetrahydrofolate (THF) serving as the one-carbon carrier. This reaction serves as the major source of one-carbon groups required for the biosynthesis of purines, thymidylate, methionine, and other important biomolecules. Also exhibits THF-independent aldolase activity toward beta-hydroxyamino acids, producing glycine and aldehydes, via a retro-aldol mechanism. The chain is Serine hydroxymethyltransferase 1 from Sulfurimonas denitrificans (strain ATCC 33889 / DSM 1251) (Thiomicrospira denitrificans (strain ATCC 33889 / DSM 1251)).